The primary structure comprises 419 residues: Tyrosine--tRNA ligase (419 aa).

An L-tyrosine-binding site is contributed by Tyr34. The 'HIGH' region signature appears at 39–48 (PSGDSMHIGH). Residues Tyr168 and Gln172 each contribute to the L-tyrosine site. A 'KMSKS' region motif is present at residues 230 to 234 (KFGKS). Lys233 lines the ATP pocket. In terms of domain architecture, S4 RNA-binding spans 352-418 (ANLVDWLVTL…GKKKYFLVSY (67 aa)).

The protein belongs to the class-I aminoacyl-tRNA synthetase family. TyrS type 1 subfamily. As to quaternary structure, homodimer.

It is found in the cytoplasm. The catalysed reaction is tRNA(Tyr) + L-tyrosine + ATP = L-tyrosyl-tRNA(Tyr) + AMP + diphosphate + H(+). Functionally, catalyzes the attachment of tyrosine to tRNA(Tyr) in a two-step reaction: tyrosine is first activated by ATP to form Tyr-AMP and then transferred to the acceptor end of tRNA(Tyr). This chain is Tyrosine--tRNA ligase, found in Listeria monocytogenes serotype 4b (strain CLIP80459).